The sequence spans 2053 residues: MWLVTFLLLLDSLHKARPEDVGTSLYFVNDSLQHVTFSSSVGVVVPCPAAGSPSAALRWYLATGDDIYDVPHIRHVHANGTLQLFPFSPSAFNSFIHDNDYFCTAENAAGKIRSPNIRIKAVFREPYTVRVEDQRSMRGNVAVFKCLIPSSVQEYVSVVSWEKDTVSITPENRFFITSHGGLYISDVQKEDALSTYRCITQHKYSGETRQSNGARLSVTDPAESIPTILDGFHSQEVWTGHSVELPCAASGYPIPAIRWLKDGRPLPADSRWAKRITGLTISDLRTEDSGTYICEVTNTFGSAEANGILTVIDPLHVTLTPKKLKTGIGSTVILSCALTGSPEFTIRWYRNTELVLPGEAISIRGLSNETLLISSAQKSHSGAYQCFATRKAQTAQDFAIIVLEDGTPRIVSSFSEKVVNPGEQFSLMCAAKGAPPPTVTWALDDEPVVRDGSHRTNQYTMSDGTTISHMNVTGPQIRDGGVYRCTARNSVGSAEYQARINVRGPPSIRAMRNITAVAGRDTLINCRVIGYPYYSIKWYKDALLLPDNHRQVVFENGTLKLTDVQKGMDEGEYLCSVLIQPQLSISQSVHVAVKVPPLIQPFEFPPASIGQLLYIPCVVSSGDMPIRITWRKDGQVIISGSGVTIESKEFMSSLQISSVSLKHNGNYTCIASNAAATVSRERQLIVRVPPRFVVQPNNQDGIYGKAGVLNCSVDGYPPPKVMWKHAKGSGNPQQYHPVPLTGRIQILPNSSLLIRHVLEEDIGYYLCQASNGVGTDISKAMFLTVKIPAMITSHPNTTIAIKGHPKELNCTARGERPIIIRWEKGDTVIDPDRVMRYAIATKDNGDEVVSTLKLKPADRGDSVFFSCHAINSYGEDRGLIQLTVQEPPDPPELEIREVKARSMNLRWTQRFDGNSIITGFDIEYKNKSDSWDFKQSTRNISPTINQANIVDLHPASVYSIRMYSFNKIGRSEPSKELTISTEEAAPDGPPMDVTLQPVTSQSIQVTWKAPKKELQNGVIRGYQIGYRENSPGSNGQYSIVEMKATGDSEVYTLDNLKKFAQYGVVVQAFNRAGTGPSSSEINATTLEDVPSQPPENVRALSITSDVAVISWSEPPRSTLNGVLKGYRVIFWSLYVDGEWGEMQNVTTTRERVELRGMEKFTNYSVQVLAYTQAGDGVRSSVLYIQTKEDVPGPPAGIKAVPSSASSVVVSWLPPTKPNGVIRKYTIFCSSPGSGQPAPSEYETSPEQLFYRIAHLNRGQQYLLWVAAVTSAGRGNSSEKVTIEPAGKAPAKIISFGGTVTTPWMKDVRLPCNSVGDPAPAVKWTKDSEDSAIPVSLDGHRLIHTNGTLLLRAVKAEDSGYYTCTATNTGGFDTIIVNLLVQVPPDQPRLTVSKTSASSITLTWIPGDNGGSSIRGFVLQYSVDNSEEWKDVFISSSERSFKLDSLKCGTWYKVKLAAKNSVGSGRISEIIEAKTHGREPSFSKDQHLFTHINSTHARLNLQGWNNGGCPITAIVLEYRPKGTWAWQGVRANSSTEVFLTELREATWYELRMRACNSAGCGNETAQFATLDYDGSTIPPIKSAQGEGDDVKKLFTIGCPVILATLGVALLFVVRKKRKEKRLKRLRDAKSLAEMLISKNNRSFDTPVKGPPQGPRLHIDIPRVQLLIEDKEGIKQLGDDKATIPVTDAEFSQAVNPQSFCTGVSLHHPALIQSTGPLIDMSDIRPGTNPVSRKNVKSAHSTRNRYSSQWTLTKCQASTPARTLTSDWRTVGSQHGVTVTESDSYSASLSQDTDKGRNSMVSTESASSTYEELARAYEHAKLEEQLQHAKFEITECFISDSSSDQMTTGTNENADSMTSMSTPSEPGICRFTASPPKPQDADRGKNVAVPIPHRANKSDYCNLPLYTKSEAFFRKADGREPCPVVPPREASMRNLTRAYHTQARHLTLDPASKPLGLPHPGATAATATATLPQRTLAMPAPPAGTAPPAPGPTPSEPSAAPSAAPPAPSTEPPRAGGPHTKMGGSRDSLLEMSTPGVGRSQKQGAGAYSKSYTLV.

An N-terminal signal peptide occupies residues 1-18; that stretch reads MWLVTFLLLLDSLHKARP. Ig-like C2-type domains follow at residues 19–119, 115–217, 226–310, 314–396, 408–501, 506–586, 596–685, 690–784, and 788–885; these read EDVG…NIRI, PNIR…ARLS, PTIL…GILT, PLHV…QTAQ, PRIV…ARIN, PSIR…LSIS, PPLI…RQLI, PRFV…MFLT, and PAMI…LTVQ. Residues 19-1591 are Extracellular-facing; it reads EDVGTSLYFV…AQGEGDDVKK (1573 aa). Disulfide bonds link Cys-47/Cys-103, Cys-146/Cys-198, Cys-247/Cys-294, Cys-336/Cys-386, Cys-429/Cys-485, Cys-526/Cys-575, and Cys-617/Cys-669. A glycan (N-linked (GlcNAc...) asparagine) is linked at Asn-79. N-linked (GlcNAc...) asparagine glycans are attached at residues Asn-368 and Asn-471. N-linked (GlcNAc...) asparagine glycosylation is found at Asn-666 and Asn-710. A disulfide bridge links Cys-711 with Cys-767. N-linked (GlcNAc...) asparagine glycosylation is present at Asn-809. The cysteines at positions 810 and 867 are disulfide-linked. 4 consecutive Fibronectin type-III domains span residues 887–984, 989–1088, 1093–1189, and 1193–1288; these read PPDP…TEEA, PPMD…TLED, PPEN…TKED, and PPAG…AGKA. 2 N-linked (GlcNAc...) asparagine glycosylation sites follow: Asn-1144 and Asn-1162. An Ig-like C2-type 10 domain is found at 1278 to 1377; that stretch reads EKVTIEPAGK…TGGFDTIIVN (100 aa). A disulfide bond links Cys-1311 and Cys-1363. N-linked (GlcNAc...) asparagine glycosylation occurs at Asn-1345. Fibronectin type-III domains follow at residues 1383–1477 and 1478–1578; these read PPDQ…THGR and EPSF…TIPP. A glycan (N-linked (GlcNAc...) asparagine) is linked at Asn-1561. Residues 1592–1612 form a helical membrane-spanning segment; that stretch reads LFTIGCPVILATLGVALLFVV. At 1613–2053 the chain is on the cytoplasmic side; it reads RKKRKEKRLK…GAYSKSYTLV (441 aa). 4 disordered regions span residues 1716 to 1741, 1773 to 1803, 1840 to 1862, and 1974 to 2053; these read LIDM…HSTR, HGVT…STES, SSDQ…STPS, and LAMP…YTLV. Residues 1732–1741 are compositionally biased toward basic residues; the sequence is KNVKSAHSTR. Residues 1773–1789 show a composition bias toward polar residues; that stretch reads HGVTVTESDSYSASLSQ. A compositionally biased stretch (pro residues) spans 1977–1993; sequence PAPPAGTAPPAPGPTPS.

As to quaternary structure, homodimer; mediates homophilic interactions to promote cell adhesion. In terms of tissue distribution, in the retina, expressed in the rod photoreceptors, AII amacrine cells and rod bipolar cells (at protein level).

Its subcellular location is the cell membrane. The protein localises to the synapse. In terms of biological role, cell adhesion molecule that plays a role in neuronal self-avoidance. Promotes repulsion between specific neuronal processes of either the same cell or the same subtype of cells. Promotes both isoneuronal self-avoidance for creating an orderly neurite arborization in retinal rod bipolar cells and heteroneuronal self-avoidance to maintain mosaic spacing between AII amacrine cells. Adhesion molecule that promotes lamina-specific synaptic connections in the retina: expressed in specific subsets of interneurons and retinal ganglion cells (RGCs) and promotes synaptic connectivity via homophilic interactions. The protein is Cell adhesion molecule DSCAML1 (Dscaml1) of Mus musculus (Mouse).